The following is a 364-amino-acid chain: Aminomethyltransferase (364 aa).

It belongs to the GcvT family. As to quaternary structure, the glycine cleavage system is composed of four proteins: P, T, L and H.

The enzyme catalyses N(6)-[(R)-S(8)-aminomethyldihydrolipoyl]-L-lysyl-[protein] + (6S)-5,6,7,8-tetrahydrofolate = N(6)-[(R)-dihydrolipoyl]-L-lysyl-[protein] + (6R)-5,10-methylene-5,6,7,8-tetrahydrofolate + NH4(+). Functionally, the glycine cleavage system catalyzes the degradation of glycine. The sequence is that of Aminomethyltransferase from Shewanella baltica (strain OS155 / ATCC BAA-1091).